Here is a 407-residue protein sequence, read N- to C-terminus: Imidazolonepropionase (407 aa).

Residues His-74 and His-76 each contribute to the Fe(3+) site. His-74 and His-76 together coordinate Zn(2+). Arg-83, Tyr-146, and His-179 together coordinate 4-imidazolone-5-propanoate. Residue Tyr-146 participates in N-formimidoyl-L-glutamate binding. Position 244 (His-244) interacts with Fe(3+). Residue His-244 participates in Zn(2+) binding. Gln-247 contributes to the 4-imidazolone-5-propanoate binding site. Asp-319 provides a ligand contact to Fe(3+). Asp-319 serves as a coordination point for Zn(2+). Asn-321 and Gly-323 together coordinate N-formimidoyl-L-glutamate. 4-imidazolone-5-propanoate is bound at residue Thr-324.

Belongs to the metallo-dependent hydrolases superfamily. HutI family. It depends on Zn(2+) as a cofactor. Fe(3+) serves as cofactor.

It is found in the cytoplasm. The catalysed reaction is 4-imidazolone-5-propanoate + H2O = N-formimidoyl-L-glutamate. It functions in the pathway amino-acid degradation; L-histidine degradation into L-glutamate; N-formimidoyl-L-glutamate from L-histidine: step 3/3. Functionally, catalyzes the hydrolytic cleavage of the carbon-nitrogen bond in imidazolone-5-propanoate to yield N-formimidoyl-L-glutamate. It is the third step in the universal histidine degradation pathway. The polypeptide is Imidazolonepropionase (Salmonella heidelberg (strain SL476)).